We begin with the raw amino-acid sequence, 101 residues long: Putative pterin-4-alpha-carbinolamine dehydratase (101 aa).

It belongs to the pterin-4-alpha-carbinolamine dehydratase family.

It catalyses the reaction (4aS,6R)-4a-hydroxy-L-erythro-5,6,7,8-tetrahydrobiopterin = (6R)-L-erythro-6,7-dihydrobiopterin + H2O. The chain is Putative pterin-4-alpha-carbinolamine dehydratase from Burkholderia mallei (strain ATCC 23344).